The following is a 124-amino-acid chain: Small ribosomal subunit protein uS12 (124 aa).

Asp-89 carries the post-translational modification 3-methylthioaspartic acid.

It belongs to the universal ribosomal protein uS12 family. In terms of assembly, part of the 30S ribosomal subunit. Contacts proteins S8 and S17. May interact with IF1 in the 30S initiation complex.

In terms of biological role, with S4 and S5 plays an important role in translational accuracy. Its function is as follows. Interacts with and stabilizes bases of the 16S rRNA that are involved in tRNA selection in the A site and with the mRNA backbone. Located at the interface of the 30S and 50S subunits, it traverses the body of the 30S subunit contacting proteins on the other side and probably holding the rRNA structure together. The combined cluster of proteins S8, S12 and S17 appears to hold together the shoulder and platform of the 30S subunit. This Acinetobacter baumannii (strain AB307-0294) protein is Small ribosomal subunit protein uS12.